The following is a 169-amino-acid chain: Disulfide bond formation protein B 1 (169 aa).

Residues 1 to 14 (MSEETIRLGRERRY) lie on the Cytoplasmic side of the membrane. Residues 15 to 31 (LVLLGIICLALIGGALY) form a helical membrane-spanning segment. Residues 32–49 (MQIVLGEAPCPLCILQRY) lie on the Periplasmic side of the membrane. The cysteines at positions 41 and 44 are disulfide-linked. Residues 50–64 (ALLLIALFAFIGAAM) traverse the membrane as a helical segment. Over 65 to 71 (RTRRSIT) the chain is Cytoplasmic. The chain crosses the membrane as a helical span at residues 72-89 (VFEVLVVICAIAGAGVAG). Topologically, residues 90–144 (HHVYTQFYPAVSCGIDVLQPIVDDLPLAKIFPLGFQVDGFCSTPYPPILGLSLAQ) are periplasmic. A disulfide bridge links Cys102 with Cys130. A helical transmembrane segment spans residues 145 to 163 (WALVAFVLVVILVPLLTSR). Over 164–169 (NRKALR) the chain is Cytoplasmic.

It belongs to the DsbB family.

The protein localises to the cell inner membrane. Functionally, required for disulfide bond formation in some periplasmic proteins. Acts by oxidizing the DsbA protein. The sequence is that of Disulfide bond formation protein B 1 from Pseudomonas fluorescens (strain Pf0-1).